The following is a 156-amino-acid chain: Ribosome maturation factor RimP (156 aa).

This sequence belongs to the RimP family.

It is found in the cytoplasm. Its function is as follows. Required for maturation of 30S ribosomal subunits. The chain is Ribosome maturation factor RimP from Oceanobacillus iheyensis (strain DSM 14371 / CIP 107618 / JCM 11309 / KCTC 3954 / HTE831).